Consider the following 189-residue polypeptide: dTTP/UTP pyrophosphatase (189 aa).

D64 functions as the Proton acceptor in the catalytic mechanism.

It belongs to the Maf family. YhdE subfamily. A divalent metal cation serves as cofactor.

Its subcellular location is the cytoplasm. The catalysed reaction is dTTP + H2O = dTMP + diphosphate + H(+). The enzyme catalyses UTP + H2O = UMP + diphosphate + H(+). In terms of biological role, nucleoside triphosphate pyrophosphatase that hydrolyzes dTTP and UTP. May have a dual role in cell division arrest and in preventing the incorporation of modified nucleotides into cellular nucleic acids. This is dTTP/UTP pyrophosphatase from Syntrophomonas wolfei subsp. wolfei (strain DSM 2245B / Goettingen).